A 431-amino-acid chain; its full sequence is Urokinase-type plasminogen activator (431 aa).

The N-terminal stretch at Met1–Gly20 is a signal peptide. Positions Val27 to Glu63 constitute an EGF-like domain. 6 disulfides stabilise this stretch: Cys31–Cys39, Cys33–Cys51, Cys53–Cys62, Cys70–Cys151, Cys91–Cys133, and Cys122–Cys146. The binds urokinase plasminogen activator surface receptor stretch occupies residues Leu34–Phe57. A glycan (O-linked (Fuc) threonine) is linked at Thr38. The Kringle domain occupies Cys70 to Cys151. A connecting peptide region spans residues Ala152 to Phe177. Phosphoserine is present on Ser158. Intrachain disulfides connect Cys168–Cys299, Cys209–Cys225, Cys217–Cys288, Cys313–Cys382, Cys345–Cys361, and Cys372–Cys400. The 246-residue stretch at Ile179–Lys424 folds into the Peptidase S1 domain. Active-site charge relay system residues include His224 and Asp275. Residue Asn322 is glycosylated (N-linked (GlcNAc...) asparagine). The residue at position 323 (Ser323) is a Phosphoserine. The Charge relay system role is filled by Ser376.

This sequence belongs to the peptidase S1 family. As to quaternary structure, found in high and low molecular mass forms. Each consists of two chains, A and B. The high molecular mass form contains a long chain A which is cleaved to yield a short chain A. Forms heterodimer with SERPINA5. Binds LRP1B; binding is followed by internalization and degradation. Interacts with MRC2. Interacts with PLAUR. In complex with SERPINE1, interacts with PLAUR/uPAR. Interacts with SORL1 and LRP1, either alone or in complex with SERPINE1; these interactions are abolished in the presence of LRPAP1/RAP. The ternary complex composed of PLAUR-PLAU-PAI1 also interacts with SORLA. Phosphorylation of Ser-158 and Ser-323 abolishes proadhesive ability but does not interfere with receptor binding. Post-translationally, produced as an inactive single-chain protein (pro-uPA or sc-uPA), is processed into the active disulfide-linked two-chain form of PLAU/uPA by a proteolytic event mediated, at least, by TMPRSS4. As to expression, expressed in the prostate gland and prostate cancers.

It localises to the secreted. It catalyses the reaction Specific cleavage of Arg-|-Val bond in plasminogen to form plasmin.. Its activity is regulated as follows. Inhibited by SERPINA5. Inhibited by SERPINE1. Functionally, specifically cleaves the zymogen plasminogen to form the active enzyme plasmin. This is Urokinase-type plasminogen activator from Homo sapiens (Human).